Here is a 366-residue protein sequence, read N- to C-terminus: Probable dual-specificity RNA methyltransferase RlmN (366 aa).

The active-site Proton acceptor is the glutamate 107. The Radical SAM core domain maps to 113–342; that stretch reads AEERMTACLS…MAQKFHVTVR (230 aa). Cysteine 120 and cysteine 353 are disulfide-bonded. Residues cysteine 127, cysteine 131, and cysteine 134 each contribute to the [4Fe-4S] cluster site. Residues 177–178, serine 210, 233–235, and asparagine 310 contribute to the S-adenosyl-L-methionine site; these read GE and SLH. Cysteine 353 serves as the catalytic S-methylcysteine intermediate.

This sequence belongs to the radical SAM superfamily. RlmN family. It depends on [4Fe-4S] cluster as a cofactor.

It is found in the cytoplasm. The enzyme catalyses adenosine(2503) in 23S rRNA + 2 reduced [2Fe-2S]-[ferredoxin] + 2 S-adenosyl-L-methionine = 2-methyladenosine(2503) in 23S rRNA + 5'-deoxyadenosine + L-methionine + 2 oxidized [2Fe-2S]-[ferredoxin] + S-adenosyl-L-homocysteine. It carries out the reaction adenosine(37) in tRNA + 2 reduced [2Fe-2S]-[ferredoxin] + 2 S-adenosyl-L-methionine = 2-methyladenosine(37) in tRNA + 5'-deoxyadenosine + L-methionine + 2 oxidized [2Fe-2S]-[ferredoxin] + S-adenosyl-L-homocysteine. In terms of biological role, specifically methylates position 2 of adenine 2503 in 23S rRNA and position 2 of adenine 37 in tRNAs. This chain is Probable dual-specificity RNA methyltransferase RlmN, found in Chlorobium chlorochromatii (strain CaD3).